The following is a 152-amino-acid chain: Deoxyuridine 5'-triphosphate nucleotidohydrolase (152 aa).

Substrate-binding positions include 71–73, asparagine 84, 88–90, and lysine 98; these read RSG and LID.

It belongs to the dUTPase family. Requires Mg(2+) as cofactor.

It catalyses the reaction dUTP + H2O = dUMP + diphosphate + H(+). It participates in pyrimidine metabolism; dUMP biosynthesis; dUMP from dCTP (dUTP route): step 2/2. In terms of biological role, this enzyme is involved in nucleotide metabolism: it produces dUMP, the immediate precursor of thymidine nucleotides and it decreases the intracellular concentration of dUTP so that uracil cannot be incorporated into DNA. The polypeptide is Deoxyuridine 5'-triphosphate nucleotidohydrolase (Legionella pneumophila subsp. pneumophila (strain Philadelphia 1 / ATCC 33152 / DSM 7513)).